A 145-amino-acid polypeptide reads, in one-letter code: Basic phospholipase A2 cPm08 (145 aa).

An N-terminal signal peptide occupies residues 1–21 (MYPAHLLVLLAVCVSLLGASA). The propeptide occupies 22–27 (IPPLPL). 7 disulfide bridges follow: Cys38–Cys98, Cys54–Cys144, Cys56–Cys72, Cys71–Cys125, Cys78–Cys118, Cys87–Cys111, and Cys105–Cys116. Ca(2+)-binding residues include Tyr55, Gly57, and Gly59. His75 is an active-site residue. Residue Asp76 participates in Ca(2+) binding. Asp119 is an active-site residue.

Belongs to the phospholipase A2 family. Group I subfamily. D49 sub-subfamily. It depends on Ca(2+) as a cofactor. In terms of tissue distribution, expressed by the venom gland.

The protein resides in the secreted. The enzyme catalyses a 1,2-diacyl-sn-glycero-3-phosphocholine + H2O = a 1-acyl-sn-glycero-3-phosphocholine + a fatty acid + H(+). Functionally, PLA2 catalyzes the calcium-dependent hydrolysis of the 2-acyl groups in 3-sn-phosphoglycerides. This Laticauda semifasciata (Black-banded sea krait) protein is Basic phospholipase A2 cPm08.